The primary structure comprises 418 residues: CinA-like protein (418 aa).

The protein belongs to the CinA family.

This is CinA-like protein from Leptospira interrogans serogroup Icterohaemorrhagiae serovar Lai (strain 56601).